A 1106-amino-acid polypeptide reads, in one-letter code: Probable NAD-specific glutamate dehydrogenase (1106 aa).

The active site involves K654.

This sequence belongs to the Glu/Leu/Phe/Val dehydrogenases family. As to quaternary structure, homotetramer.

The protein localises to the cytoplasm. The catalysed reaction is L-glutamate + NAD(+) + H2O = 2-oxoglutarate + NH4(+) + NADH + H(+). Functionally, NAD(+)-dependent glutamate dehydrogenase which degrades glutamate to ammonia and alpha-ketoglutarate. The polypeptide is Probable NAD-specific glutamate dehydrogenase (gdh2) (Schizosaccharomyces pombe (strain 972 / ATCC 24843) (Fission yeast)).